A 265-amino-acid chain; its full sequence is Phosphate import ATP-binding protein PstB (265 aa).

The region spanning 18 to 260 (IAAKGVNVYY…PEDPRTESYI (243 aa)) is the ABC transporter domain. Residue 50–57 (GPSGCGKS) participates in ATP binding.

This sequence belongs to the ABC transporter superfamily. Phosphate importer (TC 3.A.1.7) family. In terms of assembly, the complex is composed of two ATP-binding proteins (PstB), two transmembrane proteins (PstC and PstA) and a solute-binding protein (PstS).

It is found in the cell inner membrane. It catalyses the reaction phosphate(out) + ATP + H2O = ADP + 2 phosphate(in) + H(+). In terms of biological role, part of the ABC transporter complex PstSACB involved in phosphate import. Responsible for energy coupling to the transport system. This Ruegeria sp. (strain TM1040) (Silicibacter sp.) protein is Phosphate import ATP-binding protein PstB.